Consider the following 635-residue polypeptide: Probable potassium transport system protein Kup (635 aa).

The next 12 membrane-spanning stretches (helical) occupy residues 20–40, 62–82, 111–131, 149–169, 180–200, 223–243, 259–279, 292–312, 349–369, 377–397, 408–428, and 429–449; these read MALV…SPLY, VLSL…VTII, AYVV…DGVI, PSLH…VFMV, VFGP…IWNI, GWHG…GEAL, WYFF…ALVL, AVPS…AVIA, IYVP…VLIF, VAYG…LALV, WVLP…IANG, and AKLL…FTLM.

This sequence belongs to the HAK/KUP transporter (TC 2.A.72) family.

The protein resides in the cell inner membrane. It carries out the reaction K(+)(in) + H(+)(in) = K(+)(out) + H(+)(out). Its function is as follows. Transport of potassium into the cell. Likely operates as a K(+):H(+) symporter. The sequence is that of Probable potassium transport system protein Kup from Xanthomonas campestris pv. campestris (strain 8004).